A 450-amino-acid chain; its full sequence is Adenosylhomocysteinase (450 aa).

Substrate-binding residues include T59, D135, and E160. Residue 161–163 (TTT) coordinates NAD(+). Substrate contacts are provided by K190 and D194. NAD(+) is bound by residues N195, 224 to 229 (GFGDVG), E247, 303 to 305 (IGH), and N350.

It belongs to the adenosylhomocysteinase family. NAD(+) is required as a cofactor.

It localises to the cytoplasm. It carries out the reaction S-adenosyl-L-homocysteine + H2O = L-homocysteine + adenosine. Its pathway is amino-acid biosynthesis; L-homocysteine biosynthesis; L-homocysteine from S-adenosyl-L-homocysteine: step 1/1. In terms of biological role, adenosylhomocysteine is a competitive inhibitor of S-adenosyl-L-methionine-dependent methyl transferase reactions; therefore adenosylhomocysteinase may play a key role in the control of methylations via regulation of the intracellular concentration of adenosylhomocysteine. This chain is Adenosylhomocysteinase (SAH1), found in Candida albicans (strain SC5314 / ATCC MYA-2876) (Yeast).